Consider the following 172-residue polypeptide: MLPMITGFMNYGQQTLRAARYIGQGFMITLSHTNRLPVTIQYPYEKLITSERFRGRIHFEFDKCIACEVCVRVCPIDLPVVDWKLETNIRKKRLLNYSIDFGICIFCGNCVEYCPTNCLSMTEEYEFSTYDRHELNYNQIALGRLPMSVIDDYTIRTILNSPQTKNEVNPLI.

4Fe-4S ferredoxin-type domains are found at residues 55-84 (GRIHFEFDKCIACEVCVRVCPIDLPVVDWK) and 95-124 (LNYSIDFGICIFCGNCVEYCPTNCLSMTEE). [4Fe-4S] cluster is bound by residues cysteine 64, cysteine 67, cysteine 70, cysteine 74, cysteine 104, cysteine 107, cysteine 110, and cysteine 114.

The protein belongs to the complex I 23 kDa subunit family. NDH is composed of at least 16 different subunits, 5 of which are encoded in the nucleus. It depends on [4Fe-4S] cluster as a cofactor.

It localises to the plastid. The protein resides in the chloroplast thylakoid membrane. The enzyme catalyses a plastoquinone + NADH + (n+1) H(+)(in) = a plastoquinol + NAD(+) + n H(+)(out). It catalyses the reaction a plastoquinone + NADPH + (n+1) H(+)(in) = a plastoquinol + NADP(+) + n H(+)(out). Functionally, NDH shuttles electrons from NAD(P)H:plastoquinone, via FMN and iron-sulfur (Fe-S) centers, to quinones in the photosynthetic chain and possibly in a chloroplast respiratory chain. The immediate electron acceptor for the enzyme in this species is believed to be plastoquinone. Couples the redox reaction to proton translocation, and thus conserves the redox energy in a proton gradient. This chain is NAD(P)H-quinone oxidoreductase subunit I, chloroplastic, found in Olimarabidopsis pumila (Dwarf rocket).